Reading from the N-terminus, the 738-residue chain is Catalase-peroxidase (738 aa).

Residues 1–16 (MSENHDAIVTDAKTEE) show a composition bias toward basic and acidic residues. The interval 1–37 (MSENHDAIVTDAKTEEAGGCPVAHGRAPHPTQGGGNR) is disordered. The segment at residues 108–231 (WHSAGTYRIS…LGAVQMGLIY (124 aa)) is a cross-link (tryptophyl-tyrosyl-methioninium (Trp-Tyr) (with M-257)). Histidine 109 serves as the catalytic Proton acceptor. A cross-link (tryptophyl-tyrosyl-methioninium (Tyr-Met) (with W-108)) is located at residues 231-257 (YVNPEGPNGNPDPIAAARDIRETFGRM). A heme b-binding site is contributed by histidine 272.

It belongs to the peroxidase family. Peroxidase/catalase subfamily. As to quaternary structure, homodimer or homotetramer. The cofactor is heme b. Post-translationally, formation of the three residue Trp-Tyr-Met cross-link is important for the catalase, but not the peroxidase activity of the enzyme.

The catalysed reaction is H2O2 + AH2 = A + 2 H2O. It catalyses the reaction 2 H2O2 = O2 + 2 H2O. Functionally, bifunctional enzyme with both catalase and broad-spectrum peroxidase activity. The sequence is that of Catalase-peroxidase from Streptomyces ambofaciens.